Here is a 215-residue protein sequence, read N- to C-terminus: N-(5'-phosphoribosyl)anthranilate isomerase (215 aa).

This sequence belongs to the TrpF family.

It catalyses the reaction N-(5-phospho-beta-D-ribosyl)anthranilate = 1-(2-carboxyphenylamino)-1-deoxy-D-ribulose 5-phosphate. Its pathway is amino-acid biosynthesis; L-tryptophan biosynthesis; L-tryptophan from chorismate: step 3/5. The polypeptide is N-(5'-phosphoribosyl)anthranilate isomerase (Rhizobium meliloti (strain 1021) (Ensifer meliloti)).